The primary structure comprises 588 residues: Zinc finger protein 599 (588 aa).

The 72-residue stretch at 9–80 folds into the KRAB domain; the sequence is VSFEDVVVTF…KRGLSQSTCA (72 aa). 14 consecutive C2H2-type zinc fingers follow at residues 199 to 221, 227 to 249, 255 to 277, 283 to 305, 311 to 333, 339 to 361, 367 to 389, 395 to 417, 423 to 445, 451 to 473, 479 to 501, 507 to 529, 535 to 557, and 563 to 585; these read YTCTECGKGFSKKWALVRHQQIH, YECNECGKACRYMADVIRHMRLH, YKCIECGKAFKRRFHLTEHQRIH, YECKECGKAFTHRSSFIQHNMTH, FLCKECGKAFYYSSSFAQHMRIH, YECGECGKAFTHRSTFIQHNVTH, FLCKECGKTFCLNSSFTQHMRIH, YECGECGKAFTHRSTFIRHKRTH, FECKECGKAFCDSSSLIQHMRIH, YECSECGKAFTHHSVFIRHNRTH, LECKECAKAFYYSSSFTRHMRIH, YVCRECGKAFTQPANFVRHNRIH, FECKECEKAFCDNFALTQHMRTH, and FECNECGKTFSHSSSFTHHRKIH.

The protein belongs to the krueppel C2H2-type zinc-finger protein family.

The protein resides in the nucleus. May be involved in transcriptional regulation. The chain is Zinc finger protein 599 (ZNF599) from Homo sapiens (Human).